The primary structure comprises 124 residues: MSDILFVSIGAILGANIRFQIHHKLGNLNLDKGFLILIINTFASFGLGLFLSLVEQFRAFTYSYQLILFFSIGFFGSLSTFSSFVYDLFDLCLQLELFRALKLFIISVSIGIIAFAFGLFLGTQ.

The next 4 helical transmembrane spans lie at 1-21 (MSDI…RFQI), 34-54 (FLIL…LSLV), 66-86 (LILF…SFVY), and 103-123 (LFII…FLGT). The Na(+) site is built by Gly76 and Ser79.

It belongs to the fluoride channel Fluc/FEX (TC 1.A.43) family.

The protein localises to the cell inner membrane. It catalyses the reaction fluoride(in) = fluoride(out). Its activity is regulated as follows. Na(+) is not transported, but it plays an essential structural role and its presence is essential for fluoride channel function. Functionally, fluoride-specific ion channel. Important for reducing fluoride concentration in the cell, thus reducing its toxicity. The protein is Fluoride-specific ion channel FluC 2 of Prochlorococcus marinus (strain NATL2A).